Reading from the N-terminus, the 1575-residue chain is Ras GTPase-activating-like protein IQGAP2 (1575 aa).

Residue Ser-16 is modified to Phosphoserine. Residues 41–156 enclose the Calponin-homology (CH) domain; that stretch reads LCHLEEAKRW…YCIHALSLYL (116 aa). Thr-356 carries the post-translational modification Phosphothreonine. The WW domain maps to 594–627; sequence VSSDGSWLKLNLHKKYDYYYNTDSKESSWVTPES. Residues Ser-595, Ser-599, and Ser-685 each carry the phosphoserine modification. 3 IQ domains span residues 690–719, 720–749, and 750–779; these read QEENVVKIQAFWKGYKQRKEYMHRRQTFID, NTDSIVKIQSWFRMATARKSYLSRLQYFRD, and HNNEIVKIQSLLRANKARDDYKTLVGSENP. Position 716 is a phosphothreonine (Thr-716). Phosphothreonine is present on residues Thr-782, Thr-881, Thr-1002, and Thr-1269. One can recognise a Ras-GAP domain in the interval 933–1182; it reads YLLLKLFKTA…QEFRKYFKEA (250 aa). Ser-1271, Ser-1279, Ser-1358, and Ser-1461 each carry phosphoserine.

Isoform 2 expression is enhanced in testis.

In terms of biological role, binds to activated CDC42 and RAC1 but does not seem to stimulate their GTPase activity. Associates with calmodulin. The protein is Ras GTPase-activating-like protein IQGAP2 (IQGAP2) of Homo sapiens (Human).